The primary structure comprises 65 residues: Large ribosomal subunit protein bL35 (65 aa).

It belongs to the bacterial ribosomal protein bL35 family.

The chain is Large ribosomal subunit protein bL35 from Rubrobacter xylanophilus (strain DSM 9941 / JCM 11954 / NBRC 16129 / PRD-1).